Consider the following 166-residue polypeptide: Phosphopantetheine adenylyltransferase (166 aa).

Ser8 provides a ligand contact to substrate. ATP is bound by residues 8 to 9 and His16; that span reads SF. Positions 40, 72, and 86 each coordinate substrate. ATP contacts are provided by residues 87-89, Glu97, and 122-128; these read GLR and HSFLSSS.

The protein belongs to the bacterial CoaD family. As to quaternary structure, homohexamer. It depends on Mg(2+) as a cofactor.

The protein resides in the cytoplasm. It catalyses the reaction (R)-4'-phosphopantetheine + ATP + H(+) = 3'-dephospho-CoA + diphosphate. The protein operates within cofactor biosynthesis; coenzyme A biosynthesis; CoA from (R)-pantothenate: step 4/5. Reversibly transfers an adenylyl group from ATP to 4'-phosphopantetheine, yielding dephospho-CoA (dPCoA) and pyrophosphate. The sequence is that of Phosphopantetheine adenylyltransferase from Synechococcus sp. (strain RCC307).